Reading from the N-terminus, the 278-residue chain is uncharacterized protein (278 aa).

The segment covering 1 to 16 (MFGLKVKDAQKDDQKS) has biased composition (basic and acidic residues). 2 disordered regions span residues 1 to 86 (MFGL…RGSN) and 98 to 126 (FGTT…TPWL). Low complexity-rich tracts occupy residues 33 to 45 (QGTS…RGSS) and 99 to 117 (GTTS…STPS).

It belongs to the adhesin P1 family.

This is an uncharacterized protein from Mycoplasma pneumoniae (strain ATCC 29342 / M129 / Subtype 1) (Mycoplasmoides pneumoniae).